We begin with the raw amino-acid sequence, 433 residues long: UDP-N-acetylmuramate--L-alanine ligase (433 aa).

Gly108–Ser114 provides a ligand contact to ATP.

It belongs to the MurCDEF family.

Its subcellular location is the cytoplasm. The enzyme catalyses UDP-N-acetyl-alpha-D-muramate + L-alanine + ATP = UDP-N-acetyl-alpha-D-muramoyl-L-alanine + ADP + phosphate + H(+). It participates in cell wall biogenesis; peptidoglycan biosynthesis. Functionally, cell wall formation. The protein is UDP-N-acetylmuramate--L-alanine ligase of Anoxybacillus flavithermus (strain DSM 21510 / WK1).